Here is a 335-residue protein sequence, read N- to C-terminus: Serine protease 42 (335 aa).

The N-terminal stretch at 1–24 (MASGGGSLGLIVFLLLLQPKPCEA) is a signal peptide. N-linked (GlcNAc...) asparagine glycosylation is present at asparagine 67. The 237-residue stretch at 79–315 (IMGGVDAEEG…YSKWLIAVVN (237 aa)) folds into the Peptidase S1 domain. A disulfide bridge connects residues cysteine 104 and cysteine 120. Histidine 119 functions as the Charge relay system in the catalytic mechanism. Residue asparagine 140 is glycosylated (N-linked (GlcNAc...) asparagine). The active-site Charge relay system is aspartate 165. An N-linked (GlcNAc...) asparagine glycan is attached at asparagine 176. Disulfide bonds link cysteine 199/cysteine 273, cysteine 232/cysteine 253, and cysteine 263/cysteine 291. The active-site Charge relay system is serine 267.

This sequence belongs to the peptidase S1 family. In terms of tissue distribution, testis-specific. Mainly detected in round spermatids at all the eminiferous epithelial stages (at protein level).

The protein resides in the cytoplasm. It is found in the cell membrane. Functionally, plays a role in spermatogenesis. Involved in germ cell survival during meiosis. Lacks protease activity in vitro. In Mus musculus (Mouse), this protein is Serine protease 42.